The primary structure comprises 105 residues: Small ribosomal subunit protein uS10 (105 aa).

The protein belongs to the universal ribosomal protein uS10 family. Part of the 30S ribosomal subunit.

Involved in the binding of tRNA to the ribosomes. This is Small ribosomal subunit protein uS10 from Rickettsia massiliae (strain Mtu5).